Reading from the N-terminus, the 376-residue chain is tRNA-specific 2-thiouridylase MnmA (376 aa).

ATP contacts are provided by residues 14–21 (GMSGGVDS) and M40. Positions 100 to 102 (NPD) are interaction with target base in tRNA. The active-site Nucleophile is the C105. The cysteines at positions 105 and 202 are disulfide-linked. G129 serves as a coordination point for ATP. The segment at 152–154 (KDQ) is interaction with tRNA. C202 acts as the Cysteine persulfide intermediate in catalysis. The tract at residues 315–316 (RY) is interaction with tRNA.

It belongs to the MnmA/TRMU family.

It is found in the cytoplasm. It catalyses the reaction S-sulfanyl-L-cysteinyl-[protein] + uridine(34) in tRNA + AH2 + ATP = 2-thiouridine(34) in tRNA + L-cysteinyl-[protein] + A + AMP + diphosphate + H(+). Functionally, catalyzes the 2-thiolation of uridine at the wobble position (U34) of tRNA, leading to the formation of s(2)U34. The sequence is that of tRNA-specific 2-thiouridylase MnmA from Lactococcus lactis subsp. cremoris (strain SK11).